Consider the following 223-residue polypeptide: Endonuclease V (223 aa).

Aspartate 45 and aspartate 113 together coordinate Mg(2+).

The protein belongs to the endonuclease V family. The cofactor is Mg(2+).

It localises to the cytoplasm. It carries out the reaction Endonucleolytic cleavage at apurinic or apyrimidinic sites to products with a 5'-phosphate.. DNA repair enzyme involved in the repair of deaminated bases. Selectively cleaves double-stranded DNA at the second phosphodiester bond 3' to a deoxyinosine leaving behind the intact lesion on the nicked DNA. This chain is Endonuclease V, found in Dehalococcoides mccartyi (strain CBDB1).